The chain runs to 480 residues: Plant UBX domain-containing protein 10 (480 aa).

Disordered stretches follow at residues 47–78 and 335–383; these read DASS…PRGI and ADQA…AARV. A coiled-coil region spans residues 330-389; sequence RAALEADQAREQQRQEEKERLEREAAEAERKLKEEEEARERAAREAEERQAARVRMRQEK. Positions 336 to 383 are enriched in basic and acidic residues; that stretch reads DQAREQQRQEEKERLEREAAEAERKLKEEEEARERAAREAEERQAARV. One can recognise a UBX domain in the interval 399–477; that stretch reads KGPDVTQVLV…GLHPQASLFI (79 aa).

This is Plant UBX domain-containing protein 10 from Arabidopsis thaliana (Mouse-ear cress).